A 444-amino-acid chain; its full sequence is Tol-Pal system protein TolB (444 aa).

Residues 1 to 19 (MRNIIYFILSLLFSVTSYA) form the signal peptide.

Belongs to the TolB family. As to quaternary structure, the Tol-Pal system is composed of five core proteins: the inner membrane proteins TolA, TolQ and TolR, the periplasmic protein TolB and the outer membrane protein Pal. They form a network linking the inner and outer membranes and the peptidoglycan layer.

It is found in the periplasm. Functionally, part of the Tol-Pal system, which plays a role in outer membrane invagination during cell division and is important for maintaining outer membrane integrity. The sequence is that of Tol-Pal system protein TolB from Rickettsia conorii (strain ATCC VR-613 / Malish 7).